The following is a 70-amino-acid chain: Large ribosomal subunit protein uL29 (70 aa).

It belongs to the universal ribosomal protein uL29 family.

This chain is Large ribosomal subunit protein uL29, found in Prochlorococcus marinus (strain NATL1A).